The chain runs to 939 residues: Collagen-like protein 3 (939 aa).

N-linked (GlcNAc...) asparagine; by host glycans are attached at residues Asn-15, Asn-35, Asn-39, and Asn-82. Low complexity predominate over residues 84–95 (SGSSGPSGPQGP). Disordered regions lie at residues 84–332 (SGSS…DLGN) and 358–697 (SIKG…KGEA). Collagen-like domains follow at residues 88-147 (GPSG…NGDK), 148-207 (GNKG…KGDK), 211-330 (GNKG…SPDL), 364-423 (GDKG…SGAD), 427-486 (GDKG…KGEK), 493-552 (GESG…KGSK), 564-622 (GDKG…KGDV), and 638-697 (GDKG…KGEA). 13 stretches are compositionally biased toward basic and acidic residues: residues 96–110 (KGEK…DKGE), 123–182 (DADK…DPGI), 189–230 (DADK…DIGL), 237–260 (DADK…DIGP), 267–288 (DADK…KGTK), 297–314 (KGDK…DKGE), 360–371 (KGDKGDKGDTGL), 378–416 (DADK…DTGL), 423–491 (DADK…DVGI), 498–527 (DADK…DTGI), 537–552 (KGDK…KGSK), 560–580 (KGDK…DIGI), and 589–684 (KGDK…DKGD). Residues Asn-788, Asn-820, Asn-858, Asn-919, and Asn-925 are each glycosylated (N-linked (GlcNAc...) asparagine; by host). A disordered region spans residues 896 to 923 (NGETGAPTTDSGTNYGAGGGGGGNGTQG). Gly residues predominate over residues 910 to 923 (YGAGGGGGGNGTQG).

Post-translationally, may be hydroxylated on lysine by the viral-encoded procollagen-lysine,2-oxoglutarate 5-dioxygenase.

The protein localises to the virion. Functionally, may participate in the formation of a layer of cross-linked glycosylated fibrils at the viral surface thus giving it a hairy-like appearance. In Acanthamoeba polyphaga (Amoeba), this protein is Collagen-like protein 3.